Reading from the N-terminus, the 130-residue chain is Small ribosomal subunit protein uS9 (130 aa).

It belongs to the universal ribosomal protein uS9 family.

This Clostridium perfringens (strain ATCC 13124 / DSM 756 / JCM 1290 / NCIMB 6125 / NCTC 8237 / Type A) protein is Small ribosomal subunit protein uS9.